The sequence spans 558 residues: AP2-like ethylene-responsive transcription factor AIL5 (558 aa).

Residues 1-54 show a composition bias toward low complexity; that stretch reads MKNNNNKSSSSSSYDSSLSPSSSSSSHQNWLSFSLSNNNNNFNSSSNPNLTSST. 3 disordered regions span residues 1–65, 74–93, and 166–195; these read MKNN…PSHL, SPVERQDGSPGVSPSDATAV, and HSSEVSSVHKQQPNPLAVSEASPTPKKNVE. DNA-binding regions (AP2/ERF) lie at residues 203-269 and 305-363; these read IYRG…TNFP and MYRG…TNFD. The segment at 387–406 is disordered; it reads SPATAAADKTVDLSPSDSPS.

This sequence belongs to the AP2/ERF transcription factor family. AP2 subfamily. In terms of tissue distribution, expressed in roots, seedlings, inflorescence, and siliques. Also detected at low levels in leaves.

The protein localises to the nucleus. In terms of biological role, probably acts as a transcriptional activator. Binds to the GCC-box pathogenesis-related promoter element. May be involved in the regulation of gene expression by stress factors and by components of stress signal transduction pathways. Involved in the regulation of floral organs size. In Arabidopsis thaliana (Mouse-ear cress), this protein is AP2-like ethylene-responsive transcription factor AIL5.